Here is a 2809-residue protein sequence, read N- to C-terminus: MTLEGLYLARGPLARLLLAWSALLCMAGGQGRWDGALEAAGPGRVRRRGSPGILQGPNVCGSRFHAYCCPGWRTFPGRSQCVVPICRRACGEGFCSQPNLCTCADGTLAPSCGVSRGSGCSVSCMNGGTCRGASCLCQKGYTGTVCGQPICDRGCHNGGRCIGPNRCACVYGFMGPQCERDYRTGPCFGQVGPEGCQHQLTGLVCTKALCCATVGRAWGLPCELCPAQPHPCRRGFIPNIHTGACQDVDECQAVPGLCQGGSCVNMVGSFHCRCPVGHRLSDSSAACEDYRAGACFSVLFGGRCAGDLAGHYTRRQCCCDRGRCWAAGPVPELCPPRGSNEFQQLCAQRLPLLPGHPGLFPGLLGFGSNGMGPPLGPARLNPHGSDARGIPSLGPGNSNIGTATLNQTIDICRHFTNLCLNGRCLPTPSSYRCECNVGYTQDVRGECIDVDECTSSPCHHGDCVNIPGTYHCRCYPGFQATPTRQACVDVDECIVSGGLCHLGRCVNTEGSFQCVCNAGFELSPDGKNCVDHNECATSTMCVNGVCLNEDGSFSCLCKPGFLLAPGGHYCMDIDECQTPGICVNGHCTNTEGSFRCQCLGGLAVGTDGRVCVDTHVRSTCYGAIEKGSCARPFPGTVTKSECCCANPDHGFGEPCQLCPAKDSAEFQALCSSGLGITTDGRDINECALDPEVCANGVCENLRGSYRCVCNLGYEAGASGKDCTDVDECALNSLLCDNGWCQNSPGSYSCSCPPGFHFWQDTEICKDVDECLSSPCVSGVCRNLAGSYTCKCGPGSRLDPSGTFCLDSTKGTCWLKIQESRCEVNLQGASLRSECCATLGAAWGSPCERCEIDPACARGFARMTGVTCDDVNECESFPGVCPNGRCVNTAGSFRCECPEGLMLDASGRLCVDVRLEPCFLRWDEDECGVTLPGKYRMDVCCCSIGAVWGVECEACPDPESLEFASLCPRGLGFASRDFLSGRPFYKDVNECKVFPGLCTHGTCRNTVGSFHCACAGGFALDAQERNCTDIDECRISPDLCGQGTCVNTPGSFECECFPGYESGFMLMKNCMDVDECARDPLLCRGGTCTNTDGSYKCQCPPGHELTAKGTACEDIDECSLSDGLCPHGQCVNVIGAFQCSCHAGFQSTPDRQGCVDINECRVQNGGCDVHCINTEGSYRCSCGQGYSLMPDGRACADVDECEENPRVCDQGHCTNMPGGHRCLCYDGFMATPDMRTCVDVDECDLNPHICLHGDCENTKGSFVCHCQLGYMVRKGATGCSDVDECEVGGHNCDSHASCLNIPGSFSCRCLPGWVGDGFECHDLDECVSQEHRCSPRGDCLNVPGSYRCTCRQGFAGDGFFCEDRDECAENVDLCDNGQCLNAPGGYRCECEMGFDPTEDHRACQDVDECAQGNLCAFGSCENLPGMFRCICNGGYELDRGGGNCTDINECADPVNCINGVCINTPGSYLCSCPQDFELNPSGVGCVDTRAGNCFLETHDRGDSGISCSAEIGVGVTRASCCCSLGRAWGNPCELCPMANTTEYRTLCPGGEGFQPNRITVILEDIDECQELPGLCQGGDCVNTFGSFQCECPPGYHLSEHTRICEDIDECSTHSGICGPGTCYNTLGNYTCVCPAEYLQVNGGNNCMDMRKSVCFRHYNGTCQNELAFNVTRKMCCCSYNIGQAWNRPCEACPTPISPDYQILCGNQAPGFLTDIHTGKPLDIDECGEIPAICANGICINQIGSFRCECPAGFNYNSILLACEDVDECGSRESPCQQNADCINIPGSYRCKCTRGYKLSPGGACVGRNECREIPNVCSHGDCMDTEGSYMCLCHRGFQASADQTLCMDIDECDRQPCGNGTCKNIIGSYNCLCFPGFVVTHNGDCVDFDECTTLVGQVCRFGHCLNTAGSFHCLCQDGFELTADGKNCVDTNECLSLAGTCLPGTCQNLEGSFRCICPPGFQVQSDHCIDIDECSEEPNLCLFGTCTNSPGSFQCLCPPGFVLSDNGHRCFDTRQSFCFTRFEAGKCSVPKAFNTTKTRCCCSKRPGEGWGDPCELCPQEGSAAFQELCPFGHGAVPGPDDSREDVNECAENPGVCTNGVCVNTDGSFRCECPFGYSLDFTGINCVDTDECSVGHPCGQGTCTNVIGGFECACADGFEPGLMMTCEDIDECSLNPLLCAFRCHNTEGSYLCTCPAGYTLREDGAMCRDVDECADGQQDCHARGMECKNLIGTFACVCPPGMRPLPGSGEGCTDDNECHAQPDLCVNGRCVNTAGSFRCDCDEGFQPSPTLTECHDIRQGPCFAEVLQTMCRSLSSSSEAVTRAECCCGGGRGWGPRCELCPLPGTSAYRKLCPHGSGYTAEGRDVDECRMLAHLCAHGECINSLGSFRCHCQAGYTPDATATTCLDMDECSQVPKPCTFLCKNTKGSFLCSCPRGYLLEEDGRTCKDLDECTSRQHNCQFLCVNTVGAFTCRCPPGFTQHHQACFDNDECSAQPGPCGAHGHCHNTPGSFRCECHQGFTLVSSGHGCEDVNECDGPHRCQHGCQNQLGGYRCSCPQGFTQHSQWAQCVDENECALSPPTCGSASCRNTLGGFRCVCPSGFDFDQALGGCQEVDECAGRRGPCSYSCANTPGGFLCGCPQGYFRAGQGHCVSGLGFSPGPQDTPDKEELLSSEACYECKINGLSPRDRPRRSAHRDHQVNLATLDSEALLTLGLNLSHLGRAERILELRPALEGLEGRIRYVIVRGNEQGFFRMHHLRGVSSLQLGRRRPGPGTYRLEVVSHMAGPWGVQPEGQPGPWGQALRLKVQLQLL.

An N-terminal signal peptide occupies residues 1 to 31 (MTLEGLYLARGPLARLLLAWSALLCMAGGQG). The propeptide occupies 32–48 (RWDGALEAAGPGRVRRR). An EGF-like 1 domain is found at 147 to 179 (GQPICDRGCHNGGRCIGPNRCACVYGFMGPQCE). Disulfide bonds link C151–C161, C155–C167, and C169–C178. Residues 185–237 (GPCFGQVGPEGCQHQLTGLVCTKALCCATVGRAWGLPCELCPAQPHPCRRGFI) form the TB 1 domain. Residues 247-288 (DVDECQAVPGLCQGGSCVNMVGSFHCRCPVGHRLSDSSAACE) form the EGF-like 2; calcium-binding domain. Cystine bridges form between C251/C263, C258/C272, and C274/C287. Residues 293 to 346 (GACFSVLFGGRCAGDLAGHYTRRQCCCDRGRCWAAGPVPELCPPRGSNEFQQLC) enclose the TB 2 domain. N-linked (GlcNAc...) asparagine glycosylation is present at N406. An EGF-like 3 domain is found at 408–448 (TIDICRHFTNLCLNGRCLPTPSSYRCECNVGYTQDVRGECI). 15 cysteine pairs are disulfide-bonded: C412–C424, C419–C433, C435–C447, C453–C463, C458–C472, C474–C487, C493–C505, C500–C514, C516–C529, C535–C546, C541–C555, C557–C570, C576–C587, C582–C596, and C598–C611. One can recognise an EGF-like 4; calcium-binding domain in the interval 449–488 (DVDECTSSPCHHGDCVNIPGTYHCRCYPGFQATPTRQACV). Positions 489–530 (DVDECIVSGGLCHLGRCVNTEGSFQCVCNAGFELSPDGKNCV) constitute an EGF-like 5; calcium-binding domain. Residues 531 to 571 (DHNECATSTMCVNGVCLNEDGSFSCLCKPGFLLAPGGHYCM) enclose the EGF-like 6; calcium-binding domain. The region spanning 572-612 (DIDECQTPGICVNGHCTNTEGSFRCQCLGGLAVGTDGRVCV) is the EGF-like 7; calcium-binding domain. Residues 618–670 (STCYGAIEKGSCARPFPGTVTKSECCCANPDHGFGEPCQLCPAKDSAEFQALC) enclose the TB 3 domain. The EGF-like 8; calcium-binding domain maps to 682–723 (DINECALDPEVCANGVCENLRGSYRCVCNLGYEAGASGKDCT). 9 disulfides stabilise this stretch: C686/C698, C693/C707, C709/C722, C728/C740, C735/C749, C751/C764, C770/C780, C775/C789, and C791/C804. The 42-residue stretch at 724–765 (DVDECALNSLLCDNGWCQNSPGSYSCSCPPGFHFWQDTEICK) folds into the EGF-like 9; calcium-binding domain. The 40-residue stretch at 766 to 805 (DVDECLSSPCVSGVCRNLAGSYTCKCGPGSRLDPSGTFCL) folds into the EGF-like 10; calcium-binding domain. The region spanning 810–861 (GTCWLKIQESRCEVNLQGASLRSECCATLGAAWGSPCERCEIDPACARGFAR) is the TB 4 domain. Residues 869 to 910 (DVNECESFPGVCPNGRCVNTAGSFRCECPEGLMLDASGRLCV) form the EGF-like 11; calcium-binding domain. Intrachain disulfides connect C873/C885, C880/C894, and C896/C909. Residues 915-966 (EPCFLRWDEDECGVTLPGKYRMDVCCCSIGAVWGVECEACPDPESLEFASLC) form the TB 5 domain. The EGF-like 12; calcium-binding domain maps to 986 to 1027 (DVNECKVFPGLCTHGTCRNTVGSFHCACAGGFALDAQERNCT). 36 disulfide bridges follow: C990/C1002, C997/C1011, C1013/C1026, C1032/C1044, C1039/C1053, C1055/C1069, C1075/C1087, C1082/C1096, C1098/C1111, C1117/C1129, C1124/C1138, C1140/C1153, C1159/C1170, C1166/C1179, C1181/C1194, C1200/C1212, C1207/C1221, C1223/C1236, C1242/C1254, C1249/C1263, C1265/C1278, C1284/C1297, C1291/C1306, C1308/C1319, C1325/C1338, C1332/C1347, C1349/C1360, C1366/C1378, C1373/C1387, C1389/C1402, C1408/C1419, C1414/C1428, C1430/C1443, C1449/C1460, C1455/C1469, and C1471/C1484. Residue N1025 is glycosylated (N-linked (GlcNAc...) asparagine). One can recognise an EGF-like 13; calcium-binding domain in the interval 1028–1070 (DIDECRISPDLCGQGTCVNTPGSFECECFPGYESGFMLMKNCM). The EGF-like 14; calcium-binding domain occupies 1071 to 1112 (DVDECARDPLLCRGGTCTNTDGSYKCQCPPGHELTAKGTACE). Positions 1113-1154 (DIDECSLSDGLCPHGQCVNVIGAFQCSCHAGFQSTPDRQGCV) constitute an EGF-like 15; calcium-binding domain. In terms of domain architecture, EGF-like 16; calcium-binding spans 1155–1195 (DINECRVQNGGCDVHCINTEGSYRCSCGQGYSLMPDGRACA). The EGF-like 17 domain occupies 1196–1237 (DVDECEENPRVCDQGHCTNMPGGHRCLCYDGFMATPDMRTCV). Positions 1238–1279 (DVDECDLNPHICLHGDCENTKGSFVCHCQLGYMVRKGATGCS) constitute an EGF-like 18; calcium-binding domain. Positions 1280-1320 (DVDECEVGGHNCDSHASCLNIPGSFSCRCLPGWVGDGFECH) constitute an EGF-like 19; calcium-binding domain. Residues 1321-1361 (DLDECVSQEHRCSPRGDCLNVPGSYRCTCRQGFAGDGFFCE) enclose the EGF-like 20; calcium-binding domain. Residues 1362–1403 (DRDECAENVDLCDNGQCLNAPGGYRCECEMGFDPTEDHRACQ) enclose the EGF-like 21; calcium-binding domain. Residues 1404–1444 (DVDECAQGNLCAFGSCENLPGMFRCICNGGYELDRGGGNCT) form the EGF-like 22; calcium-binding domain. The N-linked (GlcNAc...) asparagine glycan is linked to N1442. The 41-residue stretch at 1445–1485 (DINECADPVNCINGVCINTPGSYLCSCPQDFELNPSGVGCV) folds into the EGF-like 23; calcium-binding domain. The TB 6 domain maps to 1490–1546 (GNCFLETHDRGDSGISCSAEIGVGVTRASCCCSLGRAWGNPCELCPMANTTEYRTLC). N1538 carries an N-linked (GlcNAc...) asparagine glycan. Residues 1563-1604 (DIDECQELPGLCQGGDCVNTFGSFQCECPPGYHLSEHTRICE) form the EGF-like 24; calcium-binding domain. Intrachain disulfides connect C1567–C1579, C1574–C1588, C1590–C1603, C1609–C1621, C1616–C1630, and C1632–C1645. Residues 1605 to 1646 (DIDECSTHSGICGPGTCYNTLGNYTCVCPAEYLQVNGGNNCM) enclose the EGF-like 25; calcium-binding domain. N1627 is a glycosylation site (N-linked (GlcNAc...) asparagine). One can recognise a TB 7 domain in the interval 1651–1703 (SVCFRHYNGTCQNELAFNVTRKMCCCSYNIGQAWNRPCEACPTPISPDYQILC). N-linked (GlcNAc...) asparagine glycans are attached at residues N1658 and N1668. The EGF-like 26; calcium-binding domain maps to 1721–1762 (DIDECGEIPAICANGICINQIGSFRCECPAGFNYNSILLACE). 21 disulfide bridges follow: C1725-C1737, C1732-C1746, C1748-C1761, C1767-C1780, C1774-C1789, C1791-C1803, C1809-C1821, C1816-C1830, C1832-C1845, C1851-C1861, C1856-C1870, C1872-C1884, C1890-C1903, C1898-C1912, C1914-C1927, C1933-C1945, C1940-C1954, C1956-C1967, C1973-C1985, C1980-C1994, and C1996-C2009. An EGF-like 27; calcium-binding domain is found at 1763 to 1804 (DVDECGSRESPCQQNADCINIPGSYRCKCTRGYKLSPGGACV). The 42-residue stretch at 1805-1846 (GRNECREIPNVCSHGDCMDTEGSYMCLCHRGFQASADQTLCM) folds into the EGF-like 28 domain. The region spanning 1847–1885 (DIDECDRQPCGNGTCKNIIGSYNCLCFPGFVVTHNGDCV) is the EGF-like 29; calcium-binding domain. N-linked (GlcNAc...) asparagine glycosylation is present at N1858. The EGF-like 30; calcium-binding domain maps to 1886-1928 (DFDECTTLVGQVCRFGHCLNTAGSFHCLCQDGFELTADGKNCV). The EGF-like 31; calcium-binding domain occupies 1929–1968 (DTNECLSLAGTCLPGTCQNLEGSFRCICPPGFQVQSDHCI). An EGF-like 32; calcium-binding domain is found at 1969 to 2010 (DIDECSEEPNLCLFGTCTNSPGSFQCLCPPGFVLSDNGHRCF). A TB 8 domain is found at 2015-2068 (SFCFTRFEAGKCSVPKAFNTTKTRCCCSKRPGEGWGDPCELCPQEGSAAFQELC). N-linked (GlcNAc...) asparagine glycosylation occurs at N2033. Residues 2084-2125 (DVNECAENPGVCTNGVCVNTDGSFRCECPFGYSLDFTGINCV) form the EGF-like 33; calcium-binding domain. 15 disulfides stabilise this stretch: C2088-C2100, C2095-C2109, C2111-C2124, C2130-C2141, C2136-C2150, C2152-C2164, C2170-C2181, C2177-C2190, C2192-C2205, C2211-C2225, C2218-C2234, C2236-C2250, C2256-C2268, C2263-C2277, and C2279-C2292. The EGF-like 34; calcium-binding domain maps to 2126-2165 (DTDECSVGHPCGQGTCTNVIGGFECACADGFEPGLMMTCE). Positions 2166–2206 (DIDECSLNPLLCAFRCHNTEGSYLCTCPAGYTLREDGAMCR) constitute an EGF-like 35; calcium-binding domain. In terms of domain architecture, EGF-like 36; calcium-binding spans 2207 to 2251 (DVDECADGQQDCHARGMECKNLIGTFACVCPPGMRPLPGSGEGCT). The EGF-like 37; calcium-binding domain occupies 2252 to 2293 (DDNECHAQPDLCVNGRCVNTAGSFRCDCDEGFQPSPTLTECH). The TB 9 domain occupies 2298–2351 (GPCFAEVLQTMCRSLSSSSEAVTRAECCCGGGRGWGPRCELCPLPGTSAYRKLC). One can recognise an EGF-like 38; calcium-binding domain in the interval 2363–2404 (DVDECRMLAHLCAHGECINSLGSFRCHCQAGYTPDATATTCL). 21 disulfides stabilise this stretch: C2367–C2379, C2374–C2388, C2390–C2403, C2409–C2420, C2416–C2429, C2431–C2444, C2450–C2461, C2457–C2470, C2472–C2483, C2489–C2502, C2496–C2511, C2513–C2526, C2532–C2542, C2538–C2551, C2553–C2566, C2572–C2584, C2579–C2593, C2595–C2608, C2614–C2625, C2621–C2634, and C2636–C2648. The region spanning 2405 to 2445 (DMDECSQVPKPCTFLCKNTKGSFLCSCPRGYLLEEDGRTCK) is the EGF-like 39; calcium-binding domain. In terms of domain architecture, EGF-like 40; calcium-binding spans 2446–2484 (DLDECTSRQHNCQFLCVNTVGAFTCRCPPGFTQHHQACF). An EGF-like 41; calcium-binding domain is found at 2485–2527 (DNDECSAQPGPCGAHGHCHNTPGSFRCECHQGFTLVSSGHGCE). The EGF-like 42; calcium-binding domain maps to 2528 to 2567 (DVNECDGPHRCQHGCQNQLGGYRCSCPQGFTQHSQWAQCV). Residues 2568–2609 (DENECALSPPTCGSASCRNTLGGFRCVCPSGFDFDQALGGCQ) enclose the EGF-like 43; calcium-binding domain. The EGF-like 44; calcium-binding domain occupies 2610-2649 (EVDECAGRRGPCSYSCANTPGGFLCGCPQGYFRAGQGHCV). N2713 carries N-linked (GlcNAc...) asparagine glycosylation.

This sequence belongs to the fibrillin family. Probably forms intermolecular disulfide bonds either with other FBN3 molecules or with other components of the microfibrils. As to expression, predominantly expressed in connective tissues such as skeletal muscle, tendon, skin, perichondrium and periosteum. Highly expressed in fetal lung, brain, kidney. Expressed at low level in prostate, testis, mammary gland, uterus, ovary, placenta, bladder, adrenal gland, thyroid, fetal thymus, fetal liver, liver, fetal heart and heart.

The protein resides in the secreted. Its subcellular location is the extracellular space. It localises to the extracellular matrix. Its function is as follows. Fibrillins are structural components of 10-12 nm extracellular calcium-binding microfibrils, which occur either in association with elastin or in elastin-free bundles. Fibrillin-containing microfibrils provide long-term force bearing structural support. The chain is Fibrillin-3 (FBN3) from Homo sapiens (Human).